The chain runs to 443 residues: POU domain, class 3, transcription factor 3-B (443 aa).

Disordered stretches follow at residues 21-40 (IVHS…VTSV), 100-150 (SPWS…AGAW), and 182-244 (NGML…PTSD). Residues 101 to 121 (PWSSSPVGMTGSPQQQDVKNN) show a composition bias toward polar residues. Over residues 210 to 225 (SHHHHHHHQHQHHQQA) the composition is skewed to basic residues. A POU-specific domain is found at 238 to 312 (EDTPTSDDLE…LLNKWLEEAD (75 aa)). Position 317 is a phosphoserine (Ser317). The homeobox DNA-binding region spans 330–389 (KRKKRTSIEVSVKGALESHFLKCPKPSAQEITSLADNLQLEKEVVRVWFCNRRQKEKRMT).

Belongs to the POU transcription factor family. Class-3 subfamily. Predominantly expressed in the central nervous system.

It localises to the nucleus. Functionally, transcription factor that may play important roles in patterning the embryonic brain. The chain is POU domain, class 3, transcription factor 3-B (pou3f3b) from Danio rerio (Zebrafish).